A 384-amino-acid chain; its full sequence is Dual specificity protein phosphatase 5 (384 aa).

The 123-residue stretch at 19-141 folds into the Rhodanese domain; that stretch reads AAARCVVLDC…FYSEYPECCV (123 aa). The short motif at 53-74 is the Nuclear localization signal element; that stretch reads RRARGGAVSARYVLPDEAARAR. A Tyrosine-protein phosphatase domain is found at 178-319; it reads GPVEILPFLY…LLQYESEILP (142 aa). Residue Cys263 is the Phosphocysteine intermediate of the active site.

The protein belongs to the protein-tyrosine phosphatase family. Non-receptor class dual specificity subfamily.

Its subcellular location is the nucleus. It carries out the reaction O-phospho-L-tyrosyl-[protein] + H2O = L-tyrosyl-[protein] + phosphate. The catalysed reaction is O-phospho-L-seryl-[protein] + H2O = L-seryl-[protein] + phosphate. It catalyses the reaction O-phospho-L-threonyl-[protein] + H2O = L-threonyl-[protein] + phosphate. Its function is as follows. Dual specificity protein phosphatase; active with phosphotyrosine, phosphoserine and phosphothreonine residues. The highest relative activity is toward ERK1. The sequence is that of Dual specificity protein phosphatase 5 (DUSP5) from Homo sapiens (Human).